The following is a 212-amino-acid chain: Probable U3 small nucleolar RNA-associated protein 11 (212 aa).

This sequence belongs to the UTP11 family. Component of the ribosomal small subunit (SSU) processome.

It localises to the nucleus. The protein localises to the nucleolus. Involved in nucleolar processing of pre-18S ribosomal RNA. The sequence is that of Probable U3 small nucleolar RNA-associated protein 11 from Plasmodium falciparum (isolate 3D7).